Consider the following 303-residue polypeptide: N-acetyl-D-glucosamine kinase (303 aa).

ATP contacts are provided by residues 4 to 11 (GFDIGGTK) and 133 to 140 (GVGGGLVF). Zn(2+) contacts are provided by His-157, Cys-177, Cys-179, and Cys-184.

It belongs to the ROK (NagC/XylR) family. NagK subfamily.

It carries out the reaction N-acetyl-D-glucosamine + ATP = N-acetyl-D-glucosamine 6-phosphate + ADP + H(+). It participates in cell wall biogenesis; peptidoglycan recycling. In terms of biological role, catalyzes the phosphorylation of N-acetyl-D-glucosamine (GlcNAc) derived from cell-wall degradation, yielding GlcNAc-6-P. This is N-acetyl-D-glucosamine kinase from Shigella flexneri serotype 5b (strain 8401).